The following is a 198-amino-acid chain: Holliday junction branch migration complex subunit RuvA (198 aa).

Positions 1-64 (MIAHLRGTLL…EDAIALFGFL (64 aa)) are domain I. The domain II stretch occupies residues 65 to 141 (DREEKRLFER…LDDLIAAAPA (77 aa)). The segment at 141-145 (AAGPV) is flexible linker. Positions 146-198 (AAGPAAEDVLSALLNLGYQRPAALKAIETAVEKDAAAGEDFDLLFRAALKLIR) are domain III.

This sequence belongs to the RuvA family. In terms of assembly, homotetramer. Forms an RuvA(8)-RuvB(12)-Holliday junction (HJ) complex. HJ DNA is sandwiched between 2 RuvA tetramers; dsDNA enters through RuvA and exits via RuvB. An RuvB hexamer assembles on each DNA strand where it exits the tetramer. Each RuvB hexamer is contacted by two RuvA subunits (via domain III) on 2 adjacent RuvB subunits; this complex drives branch migration. In the full resolvosome a probable DNA-RuvA(4)-RuvB(12)-RuvC(2) complex forms which resolves the HJ.

Its subcellular location is the cytoplasm. Functionally, the RuvA-RuvB-RuvC complex processes Holliday junction (HJ) DNA during genetic recombination and DNA repair, while the RuvA-RuvB complex plays an important role in the rescue of blocked DNA replication forks via replication fork reversal (RFR). RuvA specifically binds to HJ cruciform DNA, conferring on it an open structure. The RuvB hexamer acts as an ATP-dependent pump, pulling dsDNA into and through the RuvAB complex. HJ branch migration allows RuvC to scan DNA until it finds its consensus sequence, where it cleaves and resolves the cruciform DNA. This chain is Holliday junction branch migration complex subunit RuvA, found in Acidobacterium capsulatum (strain ATCC 51196 / DSM 11244 / BCRC 80197 / JCM 7670 / NBRC 15755 / NCIMB 13165 / 161).